The chain runs to 503 residues: Lysine--tRNA ligase (503 aa).

The Mg(2+) site is built by Glu413 and Glu420.

The protein belongs to the class-II aminoacyl-tRNA synthetase family. Homodimer. Requires Mg(2+) as cofactor.

It is found in the cytoplasm. It catalyses the reaction tRNA(Lys) + L-lysine + ATP = L-lysyl-tRNA(Lys) + AMP + diphosphate. The chain is Lysine--tRNA ligase from Mannheimia succiniciproducens (strain KCTC 0769BP / MBEL55E).